Here is a 584-residue protein sequence, read N- to C-terminus: Arginine--tRNA ligase (584 aa).

The 'HIGH' region motif lies at 127–137 (PNLAKEMHVGH).

This sequence belongs to the class-I aminoacyl-tRNA synthetase family. As to quaternary structure, monomer.

It is found in the cytoplasm. It carries out the reaction tRNA(Arg) + L-arginine + ATP = L-arginyl-tRNA(Arg) + AMP + diphosphate. The chain is Arginine--tRNA ligase from Alcanivorax borkumensis (strain ATCC 700651 / DSM 11573 / NCIMB 13689 / SK2).